A 369-amino-acid polypeptide reads, in one-letter code: Septin-5 (369 aa).

Thr13 is subject to Phosphothreonine. The 274-residue stretch at 41 to 314 (KGFDFTLMVA…ENYRAHCIQQ (274 aa)) folds into the Septin-type G domain. The interval 51-58 (GESGLGKS) is G1 motif. Residues 51–58 (GESGLGKS), Thr85, and Gly111 each bind GTP. The tract at residues 108 to 111 (DTPG) is G3 motif. Omega-N-methylarginine is present on Arg168. Residues 189–192 (AKAD) form a G4 motif region. 190–198 (KADCLVPSE) is a GTP binding site. A Phosphoserine modification is found at Ser225. GTP contacts are provided by Gly248 and Arg263. Ser327 is modified (phosphoserine). Position 336 is a phosphothreonine (Thr336). Residues 338–369 (DAETEKLIRMKDEELRRMQEMLQRMKQQMQDQ) adopt a coiled-coil conformation.

The protein belongs to the TRAFAC class TrmE-Era-EngA-EngB-Septin-like GTPase superfamily. Septin GTPase family. In terms of assembly, septins polymerize into heterooligomeric protein complexes that form filaments, and can associate with cellular membranes, actin filaments and microtubules. GTPase activity is required for filament formation. Interacts with SEPTIN2 and SEPTIN5. In platelets, associated with a complex containing STX4. Interacts with PRKN; this interaction leads to SEPTIN5 ubiquitination and degradation. Interacts with DYRK1A. Interacts with STX1A; in the cerebellar cortex. Post-translationally, phosphorylated by DYRK1A. In platelets, phosphorylated in response to thrombin, phorbol-12-myristate-13-acetate and collagen. Expressed at high levels in the CNS, as well as in heart and platelets (at protein level).

It localises to the cytoplasm. Its subcellular location is the cytoskeleton. Filament-forming cytoskeletal GTPase. May play a role in cytokinesis (Potential). May play a role in platelet secretion. This Homo sapiens (Human) protein is Septin-5.